We begin with the raw amino-acid sequence, 112 residues long: Lutropin subunit beta (112 aa).

6 cysteine pairs are disulfide-bonded: cysteine 4–cysteine 52, cysteine 18–cysteine 67, cysteine 21–cysteine 105, cysteine 29–cysteine 83, cysteine 33–cysteine 85, and cysteine 88–cysteine 95. Asparagine 8 carries N-linked (GlcNAc...) asparagine glycosylation.

Belongs to the glycoprotein hormones subunit beta family. In terms of assembly, heterodimer of a common alpha chain and a unique beta chain which confers biological specificity to thyrotropin, lutropin, follitropin and gonadotropin.

It is found in the secreted. This Aquarana catesbeiana (American bullfrog) protein is Lutropin subunit beta (lhb).